An 83-amino-acid chain; its full sequence is MKTLLLTLVVVTIVCLDLGYTMTCYNQQSSEAKTTTTCSGGVSSCYKKTWSDGRGTIIERGCGCPSVKKGIERICCRTDKCNN.

A signal peptide spans 1 to 21 (MKTLLLTLVVVTIVCLDLGYT). Intrachain disulfides connect Cys24/Cys45, Cys38/Cys62, Cys64/Cys75, and Cys76/Cys81.

It belongs to the three-finger toxin family. Short-chain subfamily. Type I alpha-neurotoxin sub-subfamily. Expressed by the venom gland.

It is found in the secreted. Binds to muscle nicotinic acetylcholine receptor (nAChR) and inhibit acetylcholine from binding to the receptor, thereby impairing neuromuscular transmission. This is Short neurotoxin 1 from Oxyuranus scutellatus scutellatus (Australian taipan).